The chain runs to 288 residues: Serine/threonine-protein phosphatase PGAM5, mitochondrial (288 aa).

The Mitochondrial matrix segment spans residues 1-6 (MAFRQA). Residues 7–29 (LQLAACGLAGGSAAVLFSAVAVG) traverse the membrane as a helical segment. The Mitochondrial intermembrane portion of the chain corresponds to 30–288 (KPRGGGDADT…FMPPDKITRS (259 aa)). The segment at 76–81 (NVESGE) is interaction with KEAP1. Phosphoserine occurs at positions 79 and 86. 3 positions are modified to N6-acetyllysine: K115, K143, and K190.

The protein belongs to the phosphoglycerate mutase family. BPG-dependent PGAM subfamily. As to quaternary structure, dimer. Forms a ternary complex with NFE2L2 and KEAP1. Interacts with BCL2L1 and MAP3K5. Upon TNF-induced necrosis, forms in complex with RIPK1, RIPK3 and MLKL; the formation of this complex leads to PGAM5 phosphorylation. Isoform 2, but not isoform 1, interacts with DNM1L; this interaction leads to DNM1L dephosphorylation and activation and eventually to mitochondria fragmentation. Phosphorylated by the RIPK1/RIPK3 complex under necrotic conditions. This phosphorylation increases PGAM5 phosphatase activity. Post-translationally, proteolytically cleaved by PARL in response to loss of mitochondrial membrane potential.

It is found in the mitochondrion outer membrane. Its subcellular location is the mitochondrion inner membrane. The enzyme catalyses O-phospho-L-seryl-[protein] + H2O = L-seryl-[protein] + phosphate. The catalysed reaction is O-phospho-L-threonyl-[protein] + H2O = L-threonyl-[protein] + phosphate. Its function is as follows. Mitochondrial serine/threonine phosphatase that dephosphorylates various substrates and thus plays a role in different biological processes including cellular senescence or mitophagy. Modulates cellular senescence by regulating mitochondrial dynamics. Mechanistically, participates in mitochondrial fission through dephosphorylating DNM1L/DRP1. Additionally, dephosphorylates MFN2 in a stress-sensitive manner and consequently protects it from ubiquitination and degradation to promote mitochondrial network formation. Regulates mitophagy independent of PARKIN by interacting with and dephosphorylating FUNDC1, which interacts with LC3. Regulates anti-oxidative response by forming a tertiary complex with KEAP1 and NRF2. Regulates necroptosis by acting as a RIPK3 target and recruiting the RIPK1-RIPK3-MLKL necrosis 'attack' complex to mitochondria. This Mus musculus (Mouse) protein is Serine/threonine-protein phosphatase PGAM5, mitochondrial (Pgam5).